Reading from the N-terminus, the 72-residue chain is Exodeoxyribonuclease 7 small subunit (72 aa).

Belongs to the XseB family. Heterooligomer composed of large and small subunits.

The protein resides in the cytoplasm. The enzyme catalyses Exonucleolytic cleavage in either 5'- to 3'- or 3'- to 5'-direction to yield nucleoside 5'-phosphates.. Functionally, bidirectionally degrades single-stranded DNA into large acid-insoluble oligonucleotides, which are then degraded further into small acid-soluble oligonucleotides. This chain is Exodeoxyribonuclease 7 small subunit, found in Chlamydia muridarum (strain MoPn / Nigg).